An 883-amino-acid chain; its full sequence is Valine--tRNA ligase (883 aa).

Residues 51–61 (PNVTGKLHLGH) carry the 'HIGH' region motif. A 'KMSKS' region motif is present at residues 527 to 531 (KMSKS). K530 is an ATP binding site. The stretch at 811–847 (LEALIDLNVEIARLEKELEKWNKEVARVQGKLNNERF) forms a coiled coil.

Belongs to the class-I aminoacyl-tRNA synthetase family. ValS type 1 subfamily. In terms of assembly, monomer.

Its subcellular location is the cytoplasm. The catalysed reaction is tRNA(Val) + L-valine + ATP = L-valyl-tRNA(Val) + AMP + diphosphate. Catalyzes the attachment of valine to tRNA(Val). As ValRS can inadvertently accommodate and process structurally similar amino acids such as threonine, to avoid such errors, it has a 'posttransfer' editing activity that hydrolyzes mischarged Thr-tRNA(Val) in a tRNA-dependent manner. In Listeria monocytogenes serovar 1/2a (strain ATCC BAA-679 / EGD-e), this protein is Valine--tRNA ligase.